Reading from the N-terminus, the 1400-residue chain is DNA-directed RNA polymerase subunit beta' (1400 aa).

The Zn(2+) site is built by C71, C73, C86, and C89. D462, D464, and D466 together coordinate Mg(2+). Zn(2+) contacts are provided by C811, C885, C892, and C895.

It belongs to the RNA polymerase beta' chain family. In terms of assembly, the RNAP catalytic core consists of 2 alpha, 1 beta, 1 beta' and 1 omega subunit. When a sigma factor is associated with the core the holoenzyme is formed, which can initiate transcription. The cofactor is Mg(2+). Zn(2+) serves as cofactor.

The catalysed reaction is RNA(n) + a ribonucleoside 5'-triphosphate = RNA(n+1) + diphosphate. Its function is as follows. DNA-dependent RNA polymerase catalyzes the transcription of DNA into RNA using the four ribonucleoside triphosphates as substrates. This Brucella abortus (strain S19) protein is DNA-directed RNA polymerase subunit beta'.